A 258-amino-acid chain; its full sequence is MGLAKRIIPCLDIKDGRVVKGVNFVSLRDAGDPVEIARSYNEQGADELVFLDITASSENRDLILHIVEKVAAQVFIPLTVGGGVRKAEDVRRLLNAGADKVSINTSAVLNPMLIKESADHYGSQCIVIAIDARQIPDANPESPRWEVFTHGGRKPTGIDAIEWAQKIQALGAGEILLTSMDRDGTRSGFDLTLTRAISDSVDLPVIASGGVGHLDHLVEGILAGHADAVLAASIFHYGEYSILQAKQYLSSHGIEVRL.

Active-site residues include Asp-12 and Asp-131.

It belongs to the HisA/HisF family. Heterodimer of HisH and HisF.

The protein resides in the cytoplasm. It carries out the reaction 5-[(5-phospho-1-deoxy-D-ribulos-1-ylimino)methylamino]-1-(5-phospho-beta-D-ribosyl)imidazole-4-carboxamide + L-glutamine = D-erythro-1-(imidazol-4-yl)glycerol 3-phosphate + 5-amino-1-(5-phospho-beta-D-ribosyl)imidazole-4-carboxamide + L-glutamate + H(+). It participates in amino-acid biosynthesis; L-histidine biosynthesis; L-histidine from 5-phospho-alpha-D-ribose 1-diphosphate: step 5/9. Its function is as follows. IGPS catalyzes the conversion of PRFAR and glutamine to IGP, AICAR and glutamate. The HisF subunit catalyzes the cyclization activity that produces IGP and AICAR from PRFAR using the ammonia provided by the HisH subunit. The sequence is that of Imidazole glycerol phosphate synthase subunit HisF from Nitrosomonas europaea (strain ATCC 19718 / CIP 103999 / KCTC 2705 / NBRC 14298).